Consider the following 120-residue polypeptide: HTH-type transcriptional regulator NmtR (120 aa).

The 95-residue stretch at 15–109 folds into the HTH arsR-type domain; sequence LDSQAAAQVA…EAIYHSEHLH (95 aa). Positions 49–72 form a DNA-binding region, H-T-H motif; that stretch reads VTDLAEAIGMEQSAVSHQLRVLRN. D91, H93, H104, and H107 together coordinate Ni(2+).

In terms of assembly, homodimer.

Its activity is regulated as follows. Binding to DNA is inhibited by nickel and, to some extent, cobalt ions. In terms of biological role, represses transcription of ctpJ/nmtA, by binding to its promoter region. This Mycobacterium tuberculosis (strain ATCC 25618 / H37Rv) protein is HTH-type transcriptional regulator NmtR (nmtR).